The following is a 150-amino-acid chain: D-aminoacyl-tRNA deacylase (150 aa).

Positions 138 to 139 (GP) match the Gly-cisPro motif, important for rejection of L-amino acids motif.

The protein belongs to the DTD family. As to quaternary structure, homodimer.

The protein resides in the cytoplasm. It carries out the reaction glycyl-tRNA(Ala) + H2O = tRNA(Ala) + glycine + H(+). It catalyses the reaction a D-aminoacyl-tRNA + H2O = a tRNA + a D-alpha-amino acid + H(+). Functionally, an aminoacyl-tRNA editing enzyme that deacylates mischarged D-aminoacyl-tRNAs. Also deacylates mischarged glycyl-tRNA(Ala), protecting cells against glycine mischarging by AlaRS. Acts via tRNA-based rather than protein-based catalysis; rejects L-amino acids rather than detecting D-amino acids in the active site. By recycling D-aminoacyl-tRNA to D-amino acids and free tRNA molecules, this enzyme counteracts the toxicity associated with the formation of D-aminoacyl-tRNA entities in vivo and helps enforce protein L-homochirality. This Parabacteroides distasonis (strain ATCC 8503 / DSM 20701 / CIP 104284 / JCM 5825 / NCTC 11152) protein is D-aminoacyl-tRNA deacylase.